Consider the following 542-residue polypeptide: Excitatory amino acid transporter 1 (542 aa).

The Cytoplasmic segment spans residues 1-47 (MTKSNGEEPKMGGRMERFQQGVRKRTLLAKKKVQNITKEDVKSYLFR). Residues 48–68 (NAFVLLTVTAVIVGTILGFTL) form a helical membrane-spanning segment. At 69-86 (RPYRMSYREVKYFSFPGE) the chain is on the extracellular side. Residues 87–108 (LLMRMLQMLVLPLIISSLVTGM) form a helical membrane-spanning segment. At 109-122 (AALDSKASGKMGMR) the chain is on the cytoplasmic side. A helical membrane pass occupies residues 123–145 (AVVYYMTTTIIAVVIGIIIVIII). Over 146-236 (HPGKGTKENM…ITEELVPVPG (91 aa)) the chain is Extracellular. A helical transmembrane segment spans residues 237–260 (SVNGVNALGLVVFSMCFGFVIGNM). At 261 to 269 (KEQGQALRE) the chain is on the cytoplasmic side. The chain crosses the membrane as a helical span at residues 270–297 (FFDSLNEAIMRLVAVIMWYAPVGILFLI). Topologically, residues 298-318 (AGKIVEMEDMGVIGGQLAMYT) are extracellular. Residues 319–340 (VTVIVGLLIHAVIVLPLLYFLV) form a helical membrane-spanning segment. Topologically, residues 341–345 (TRKNP) are cytoplasmic. Residues 346 to 376 (WVFIGGLLQALITALGTSSSSATLPITFKCL) constitute an intramembrane region (discontinuously helical). Position 363–365 (363–365 (SSS)) interacts with L-aspartate. Over 377 to 385 (EENNGVDKR) the chain is Cytoplasmic. The chain crosses the membrane as a helical span at residues 386–412 (VTRFVLPVGATINMDGTALYEALAAIF). The Na(+) site is built by G394, T396, and N398. L-aspartate is bound at residue T402. Over 413–425 (IAQVNNFELNFGQ) the chain is Extracellular. An intramembrane region (discontinuously helical) is located at residues 426-459 (IITISITATAASIGAAGIPQAGLVTMVIVLTSVG). 443 to 447 (IPQAG) contributes to the L-aspartate binding site. The Extracellular portion of the chain corresponds to 460-472 (LPTDDITLIIAVD). A helical membrane pass occupies residues 473–494 (WFLDRLRTTTNVLGDSLGAGIV). L-aspartate-binding residues include D476 and N483. Na(+) is bound by residues N483 and D487. The Cytoplasmic portion of the chain corresponds to 495–542 (EHLSRHELKNRDVEMGNSVIEENEMKKPYQLIAQDNETEKPIDSETKM). S512 carries the phosphoserine modification.

The protein belongs to the dicarboxylate/amino acid:cation symporter (DAACS) (TC 2.A.23) family. SLC1A3 subfamily. In terms of assembly, homotrimer. Post-translationally, glycosylated. As to expression, detected in brain. Detected at very much lower levels in heart, lung, placenta and skeletal muscle. Highly expressed in cerebellum, but also found in frontal cortex, hippocampus and basal ganglia.

It localises to the cell membrane. The catalysed reaction is K(+)(in) + L-glutamate(out) + 3 Na(+)(out) + H(+)(out) = K(+)(out) + L-glutamate(in) + 3 Na(+)(in) + H(+)(in). The enzyme catalyses K(+)(in) + L-aspartate(out) + 3 Na(+)(out) + H(+)(out) = K(+)(out) + L-aspartate(in) + 3 Na(+)(in) + H(+)(in). It carries out the reaction D-aspartate(out) + K(+)(in) + 3 Na(+)(out) + H(+)(out) = D-aspartate(in) + K(+)(out) + 3 Na(+)(in) + H(+)(in). Its function is as follows. Sodium-dependent, high-affinity amino acid transporter that mediates the uptake of L-glutamate and also L-aspartate and D-aspartate. Functions as a symporter that transports one amino acid molecule together with two or three Na(+) ions and one proton, in parallel with the counter-transport of one K(+) ion. Mediates Cl(-) flux that is not coupled to amino acid transport; this avoids the accumulation of negative charges due to aspartate and Na(+) symport. Plays a redundant role in the rapid removal of released glutamate from the synaptic cleft, which is essential for terminating the postsynaptic action of glutamate. The chain is Excitatory amino acid transporter 1 from Homo sapiens (Human).